The chain runs to 160 residues: Probable NADH dehydrogenase [ubiquinone] 1 beta subcomplex subunit 2, mitochondrial (160 aa).

Belongs to the complex I NDUFB2 subunit family. As to quaternary structure, complex I is composed of 45 different subunits.

Its subcellular location is the mitochondrion inner membrane. Functionally, accessory subunit of the mitochondrial membrane respiratory chain NADH dehydrogenase (Complex I), that is believed not to be involved in catalysis. Complex I functions in the transfer of electrons from NADH to the respiratory chain. The immediate electron acceptor for the enzyme is believed to be ubiquinone. The protein is Probable NADH dehydrogenase [ubiquinone] 1 beta subcomplex subunit 2, mitochondrial of Caenorhabditis elegans.